The sequence spans 968 residues: uncharacterized protein (968 aa).

Disordered regions lie at residues 124 to 177 (SSIS…FSFP), 348 to 437 (QEDS…VNDS), 572 to 595 (TTTT…QQNT), 608 to 627 (PKAS…GSSK), and 837 to 877 (KASK…KKGK). Residues 131–157 (TIESNYLSNPSSPCQSTPILESSTPFS) show a composition bias toward polar residues. Low complexity-rich tracts occupy residues 158–177 (QKLM…FSFP), 352–431 (NNNN…NCNN), and 572–593 (TTTT…QQQQ). Low complexity predominate over residues 841–857 (DSSSSPTASSAAPGDSS).

This is an uncharacterized protein from Dictyostelium discoideum (Social amoeba).